The following is a 368-amino-acid chain: tRNA(Met) cytidine acetate ligase (368 aa).

Residues 7 to 20 (IAEFNPFHNGHKYL), Gly-96, Asn-152, and Arg-175 each bind ATP.

This sequence belongs to the TmcAL family.

It localises to the cytoplasm. The enzyme catalyses cytidine(34) in elongator tRNA(Met) + acetate + ATP = N(4)-acetylcytidine(34) in elongator tRNA(Met) + AMP + diphosphate. Functionally, catalyzes the formation of N(4)-acetylcytidine (ac(4)C) at the wobble position of elongator tRNA(Met), using acetate and ATP as substrates. First activates an acetate ion to form acetyladenylate (Ac-AMP) and then transfers the acetyl group to tRNA to form ac(4)C34. In Streptococcus pyogenes serotype M49 (strain NZ131), this protein is tRNA(Met) cytidine acetate ligase.